A 291-amino-acid chain; its full sequence is Secreted effector protein PipB (291 aa).

2 consecutive Pentapeptide repeat domains span residues 154 to 193 (LNLR…NLVG) and 199 to 238 (ANLH…ILFG).

Its subcellular location is the secreted. The protein localises to the host membrane. Functionally, effector proteins function to alter host cell physiology and promote bacterial survival in host tissues. Does not appear to be required for the formation or the maintenance of either Salmonella-containing vacuole (SCV) or the Salmonella-induced filaments (Sifs). Not required for intracellular replication in phagocytic cells. This Salmonella typhimurium (strain LT2 / SGSC1412 / ATCC 700720) protein is Secreted effector protein PipB (pipB).